The following is a 556-amino-acid chain: Jerky protein homolog (556 aa).

Positions 11-62 (RGEKRKRVVLTLKEKIDICTRLEKGESRKALMQEYNVGMSTLYDIRAHKAQL) constitute an HTH psq-type domain. 2 DNA-binding regions (H-T-H motif) span residues 38–58 (RKALMQEYNVGMSTLYDIRAH) and 110–142 (PMLIEKAKDFYEQMQLTEPCVFSGGWLWRFKAR). Residues 77-149 (QRRTLHTPKL…KARHGIKKLD (73 aa)) form the HTH CENPB-type domain. One can recognise a DDE-1 domain in the interval 213–382 (KDRLTVLMCA…VPSHVFRRAW (170 aa)). Ser-414 is subject to Phosphoserine. The interval 439–482 (SWGVAGREAEGGRPPAATSPAEVVWSSEKTPKADQDGRGDPGEG) is disordered. Over residues 467–479 (KTPKADQDGRGDP) the composition is skewed to basic and acidic residues.

It belongs to the tigger transposable element derived protein family. As to expression, expressed ubiquitously.

The protein localises to the nucleus. Its function is as follows. May bind DNA. The sequence is that of Jerky protein homolog from Homo sapiens (Human).